A 361-amino-acid polypeptide reads, in one-letter code: GDSL esterase/lipase At4g18970 (361 aa).

An N-terminal signal peptide occupies residues 1 to 22 (MARVCVMMMAMAIAMAMNIAMG). Serine 35 acts as the Nucleophile in catalysis. Catalysis depends on residues aspartate 325 and histidine 328.

Belongs to the 'GDSL' lipolytic enzyme family.

The protein resides in the secreted. This Arabidopsis thaliana (Mouse-ear cress) protein is GDSL esterase/lipase At4g18970.